Here is a 344-residue protein sequence, read N- to C-terminus: Follistatin (344 aa).

The N-terminal stretch at 1–29 (MVRARHQPGGLCLLLLLLCQFMEDRSAQA) is a signal peptide. A TB domain is found at 30–103 (GNCWLRQAKN…TCENVDCGPG (74 aa)). 18 disulfides stabilise this stretch: Cys-32/Cys-55, Cys-42/Cys-88, Cys-56/Cys-91, Cys-95/Cys-106, Cys-100/Cys-116, Cys-118/Cys-150, Cys-122/Cys-143, Cys-132/Cys-164, Cys-168/Cys-179, Cys-173/Cys-189, Cys-192/Cys-225, Cys-196/Cys-218, Cys-207/Cys-239, Cys-245/Cys-256, Cys-250/Cys-267, Cys-270/Cys-302, Cys-274/Cys-295, and Cys-284/Cys-316. Positions 94–117 (TCENVDCGPGKKCRMNKKNKPRCV) constitute a Follistatin-like 1 domain. The Kazal-like 1 domain occupies 112–166 (NKPRCVCAPDCSNITWKGPVCGLDGKTYRNECALLKARCKEQPELEVQYQGRCKK). Asn-124 carries N-linked (GlcNAc...) asparagine glycosylation. The Follistatin-like 2 domain occupies 167–190 (TCRDVFCPGSSTCVVDQTNNAYCV). One can recognise a Kazal-like 2 domain in the interval 186–241 (NAYCVTCNRICPEPASSEQYLCGNDGVTYSSACHLRKATCLLGRSIGLAYEGKCIK). The Follistatin-like 3 domain maps to 244 to 268 (SCEDIQCTGGKKCLWDFKVGRGRCS). Residues 264–318 (RGRCSLCDELCPDSKSDEPVCASDNATYASECAMKEAACSSGVLLEVKHSGSCNS) form the Kazal-like 3 domain. An N-linked (GlcNAc...) asparagine glycan is attached at Asn-288. The interval 314–344 (GSCNSISEDTEEEEEDEDQDYSFPISSILEW) is disordered. A compositionally biased stretch (acidic residues) spans 321-333 (EDTEEEEEDEDQD).

Interacts with GDF11. Interacts with activin A/INHBA. Interacts with MYOSTATIN/MSTN. As to expression, isoform 1 is the predominant isoform in serum but is undetectable in follicular fluid. In the embryo, strong expression is seen in the palatal epithelia, including the medial edge epithelial and midline epithelial seam of the palatal shelves. Less pronounced expression is also seen throughout the palatal shelf and tongue mesenchyme.

The protein localises to the secreted. Its subcellular location is the nucleus. The protein resides in the nucleolus. Multifunctional regulatory protein whose primary function is to antagonize members of the transforming growth factor beta (TGF-beta) superfamily including activin, myostatin, GDF11 or bone morphogenetic proteins (BMPs). Mechanistically, binds to these ligands in the extracellular space, blocking their type II receptor-binding site to inhibit downstream signaling. Plays an essential role in muscle fiber formation and growth both by preventing the repressive effects of myostatin and through SMAD3/AKT/mTOR signaling independently of myostatin. Also promotes neural differentiation by antagonizing the action BMP4. Acts as a specific inhibitor of the biosynthesis and secretion of pituitary follicle stimulating hormone (FSH) by sequestering activin A/INHBA. On the other hand, translocates into the nucleus where it down-regulates rRNA synthesis and ribosome biogenesis to maintain cellular energy homeostasis by binding to rDNA. The protein is Follistatin of Homo sapiens (Human).